The primary structure comprises 747 residues: Polyribonucleotide nucleotidyltransferase (747 aa).

Positions 487 and 493 each coordinate Mg(2+). A KH domain is found at 554 to 613; sequence PSTTTIKIDKDKIRDIIGPGGKVIKEICETSGAKIDISDDGSVSVYASDRDKLKVALDKI. The S1 motif domain maps to 623 to 691; that stretch reads GEIFNGTVMK…NKGKAKLTIK (69 aa). The tract at residues 691-747 is disordered; it reads KNADKDKSSNNPKPKNNVNNAKENSEPERRDSSKKRAWNEDSNNDKEEAITERKYFN. A compositionally biased stretch (low complexity) spans 699 to 712; that stretch reads SNNPKPKNNVNNAK. Residues 727-747 are compositionally biased toward basic and acidic residues; that stretch reads AWNEDSNNDKEEAITERKYFN.

Belongs to the polyribonucleotide nucleotidyltransferase family. Mg(2+) is required as a cofactor.

Its subcellular location is the cytoplasm. It catalyses the reaction RNA(n+1) + phosphate = RNA(n) + a ribonucleoside 5'-diphosphate. In terms of biological role, involved in mRNA degradation. Catalyzes the phosphorolysis of single-stranded polyribonucleotides processively in the 3'- to 5'-direction. In Rickettsia felis (strain ATCC VR-1525 / URRWXCal2) (Rickettsia azadi), this protein is Polyribonucleotide nucleotidyltransferase.